The following is a 344-amino-acid chain: Oxygen sensor histidine kinase NreB (344 aa).

Residues Cys58, Cys61, Cys73, and Cys76 each contribute to the [4Fe-4S] cluster site. Residues 152–344 (RISRELHDSV…GTNVTLNIPI (193 aa)) enclose the Histidine kinase domain. At His158 the chain carries Phosphohistidine; by autocatalysis.

[4Fe-4S] cluster serves as cofactor. Post-translationally, autophosphorylated.

The protein localises to the cytoplasm. The catalysed reaction is ATP + protein L-histidine = ADP + protein N-phospho-L-histidine.. In terms of biological role, member of the two-component regulatory system NreB/NreC involved in the control of dissimilatory nitrate/nitrite reduction in response to oxygen. NreB functions as a direct oxygen sensor histidine kinase which is autophosphorylated, in the absence of oxygen, probably at the conserved histidine residue, and transfers its phosphate group probably to a conserved aspartate residue of NreC. NreB/NreC activates the expression of the nitrate (narGHJI) and nitrite (nir) reductase operons, as well as the putative nitrate transporter gene narT. This is Oxygen sensor histidine kinase NreB (nreB) from Staphylococcus aureus (strain Mu3 / ATCC 700698).